A 620-amino-acid polypeptide reads, in one-letter code: DNA mismatch repair protein MutL (620 aa).

The segment at 332 to 402 (SELGLEAQPE…YRTPLRPATH (71 aa)) is disordered. Low complexity predominate over residues 352-365 (SNSTNSNVSSTSYS). The segment covering 378–394 (PLTTTATSYNQGQSSYR) has biased composition (polar residues).

This sequence belongs to the DNA mismatch repair MutL/HexB family.

In terms of biological role, this protein is involved in the repair of mismatches in DNA. It is required for dam-dependent methyl-directed DNA mismatch repair. May act as a 'molecular matchmaker', a protein that promotes the formation of a stable complex between two or more DNA-binding proteins in an ATP-dependent manner without itself being part of a final effector complex. This chain is DNA mismatch repair protein MutL, found in Shewanella piezotolerans (strain WP3 / JCM 13877).